We begin with the raw amino-acid sequence, 111 residues long: Antitoxin PrlF (111 aa).

The SpoVT-AbrB domain occupies 12 to 59; that stretch reads TTESKVTIRGQTTIPAPVREALKLKPGLDSIHYEILPGGQVFMCRLGD.

In terms of assembly, homodimer; forms a complex with YhaV with stoichiometry PrlF(2)-YhaV(4), possibly as a YhaV(2)-PrlF(2)-YhaV(2) complex like the MazFE complex.

The protein resides in the cytoplasm. In terms of biological role, antitoxin component of a type II toxin-antitoxin (TA) system. Labile antitoxin that binds to the YhaV toxin and neutralizes its ribonuclease activity. Also acts as a transcription factor. The YhaV/PrlF complex binds the prlF-yhaV operon, probably negatively regulating its expression. The polypeptide is Antitoxin PrlF (prlF) (Escherichia coli O6:H1 (strain CFT073 / ATCC 700928 / UPEC)).